A 137-amino-acid polypeptide reads, in one-letter code: Translation initiation factor 2 subunit beta (137 aa).

Belongs to the eIF-2-beta/eIF-5 family. In terms of assembly, heterotrimer composed of an alpha, a beta and a gamma chain.

Its function is as follows. eIF-2 functions in the early steps of protein synthesis by forming a ternary complex with GTP and initiator tRNA. This is Translation initiation factor 2 subunit beta (eif2b) from Archaeoglobus fulgidus (strain ATCC 49558 / DSM 4304 / JCM 9628 / NBRC 100126 / VC-16).